A 240-amino-acid chain; its full sequence is MDARKRGRPEAAASHNSNGGFKRSKQEMESISTGLGSKSKPCTKFFSTSGCPFGDNCHFLHYVPGGYNAAAQMTNLRPPVSQVSRNMQGSGGPGGRFSGRGDPGSGPVSIFGASTSKISVDASLAGAIIGKGGIHSKQICRETGAKLSIKDHERDPNLKIIELEGTFEQINVASGMVRELIGRLGSVKKPQGIGGPEGKPHPGSNYKTKICDRYSKGNCTYGDRCHFAHGESELRRSGIA.

Disordered stretches follow at residues 1–37 (MDAR…GLGS) and 81–106 (SQVS…PGSG). The segment at 36-64 (GSKSKPCTKFFSTSGCPFGDNCHFLHYVP) adopts a C3H1-type 1 zinc-finger fold. Positions 89–104 (GSGGPGGRFSGRGDPG) are enriched in gly residues. The KH domain maps to 113–177 (ASTSKISVDA…EQINVASGMV (65 aa)). The segment at 205–232 (NYKTKICDRYSKGNCTYGDRCHFAHGES) adopts a C3H1-type 2 zinc-finger fold.

This chain is Zinc finger CCCH domain-containing protein 52, found in Arabidopsis thaliana (Mouse-ear cress).